Consider the following 311-residue polypeptide: Pseudouridine-5'-phosphate glycosidase (311 aa).

The active-site Proton donor is the Glu32. Residues Lys96 and Val116 each contribute to the substrate site. Asp148 provides a ligand contact to Mn(2+). 150 to 152 (SAD) is a binding site for substrate. Lys169 (nucleophile) is an active-site residue.

Belongs to the pseudouridine-5'-phosphate glycosidase family. As to quaternary structure, homotrimer. Mn(2+) serves as cofactor.

The catalysed reaction is D-ribose 5-phosphate + uracil = psi-UMP + H2O. Catalyzes the reversible cleavage of pseudouridine 5'-phosphate (PsiMP) to ribose 5-phosphate and uracil. Functions biologically in the cleavage direction, as part of a pseudouridine degradation pathway. The chain is Pseudouridine-5'-phosphate glycosidase from Roseiflexus sp. (strain RS-1).